The following is a 351-amino-acid chain: Phosphoribosylformylglycinamidine cyclo-ligase (351 aa).

The protein belongs to the AIR synthase family.

It is found in the cytoplasm. The catalysed reaction is 2-formamido-N(1)-(5-O-phospho-beta-D-ribosyl)acetamidine + ATP = 5-amino-1-(5-phospho-beta-D-ribosyl)imidazole + ADP + phosphate + H(+). The protein operates within purine metabolism; IMP biosynthesis via de novo pathway; 5-amino-1-(5-phospho-D-ribosyl)imidazole from N(2)-formyl-N(1)-(5-phospho-D-ribosyl)glycinamide: step 2/2. In Idiomarina loihiensis (strain ATCC BAA-735 / DSM 15497 / L2-TR), this protein is Phosphoribosylformylglycinamidine cyclo-ligase.